A 171-amino-acid chain; its full sequence is Lipoprotein signal peptidase (171 aa).

3 helical membrane passes run 7–27, 64–84, and 88–108; these read GLLALVLTLILDQATKLGLYF, IGRWLLVALSLAAAIGLGLWM, and TSRLLGIALGLIVGGALGNAI. Active-site residues include aspartate 118 and aspartate 136. A helical membrane pass occupies residues 128–148; that stretch reads SWYVFNVADAAIVAGVIGLIL.

Belongs to the peptidase A8 family.

Its subcellular location is the cell inner membrane. It carries out the reaction Release of signal peptides from bacterial membrane prolipoproteins. Hydrolyzes -Xaa-Yaa-Zaa-|-(S,diacylglyceryl)Cys-, in which Xaa is hydrophobic (preferably Leu), and Yaa (Ala or Ser) and Zaa (Gly or Ala) have small, neutral side chains.. It participates in protein modification; lipoprotein biosynthesis (signal peptide cleavage). In terms of biological role, this protein specifically catalyzes the removal of signal peptides from prolipoproteins. The sequence is that of Lipoprotein signal peptidase from Methylobacterium radiotolerans (strain ATCC 27329 / DSM 1819 / JCM 2831 / NBRC 15690 / NCIMB 10815 / 0-1).